Here is a 58-residue protein sequence, read N- to C-terminus: MAFPVLNLLLDVAVSSEAATNSAIGMIGSFLAAAAFIVVPAASFLIWVSQKDALERKR.

Residues 27–47 (IGSFLAAAAFIVVPAASFLIW) form a helical membrane-spanning segment.

This sequence belongs to the PsbX family. Type 2 subfamily. In terms of assembly, PSII consists of a core antenna complex that captures photons, and an electron transfer chain that converts photonic excitation into a charge separation. PSII forms dimeric complexes.

The protein resides in the cellular thylakoid membrane. In terms of biological role, involved in the binding and/or turnover of quinones at the Q(B) site of Photosystem II. This Prochlorococcus marinus (strain MIT 9211) protein is Photosystem II reaction center X protein.